The following is a 213-amino-acid chain: Probable germin-like protein subfamily 2 member 5 (213 aa).

A signal peptide spans 1 to 22 (MASFATHLVVVVTMLFVAMASA). A disulfide bridge connects residues Cys-29 and Cys-44. One can recognise a Cupin type-1 domain in the interval 58 to 203 (KGLANIAATN…SFQLKHKQVK (146 aa)). Asn-67 carries an N-linked (GlcNAc...) asparagine glycan. Positions 106, 108, 113, and 152 each coordinate Mn(2+).

The protein belongs to the germin family. Oligomer (believed to be a pentamer but probably hexamer).

The protein resides in the secreted. Its subcellular location is the extracellular space. It localises to the apoplast. Functionally, may play a role in plant defense. Probably has no oxalate oxidase activity even if the active site is conserved. In Arabidopsis thaliana (Mouse-ear cress), this protein is Probable germin-like protein subfamily 2 member 5.